Here is an 813-residue protein sequence, read N- to C-terminus: Leucine--tRNA ligase (813 aa).

The 'HIGH' region signature appears at proline 39–histidine 49. The short motif at lysine 582–serine 586 is the 'KMSKS' region element. Residue lysine 585 coordinates ATP.

Belongs to the class-I aminoacyl-tRNA synthetase family.

It is found in the cytoplasm. It carries out the reaction tRNA(Leu) + L-leucine + ATP = L-leucyl-tRNA(Leu) + AMP + diphosphate. This is Leucine--tRNA ligase from Campylobacter hominis (strain ATCC BAA-381 / DSM 21671 / CCUG 45161 / LMG 19568 / NCTC 13146 / CH001A).